Reading from the N-terminus, the 264-residue chain is 3-methyl-2-oxobutanoate hydroxymethyltransferase (264 aa).

Mg(2+)-binding residues include aspartate 45 and aspartate 84. 3-methyl-2-oxobutanoate is bound by residues 45-46 (DS), aspartate 84, and lysine 112. Glutamate 114 provides a ligand contact to Mg(2+). Glutamate 181 serves as the catalytic Proton acceptor.

This sequence belongs to the PanB family. In terms of assembly, homodecamer; pentamer of dimers. The cofactor is Mg(2+).

The protein resides in the cytoplasm. The catalysed reaction is 3-methyl-2-oxobutanoate + (6R)-5,10-methylene-5,6,7,8-tetrahydrofolate + H2O = 2-dehydropantoate + (6S)-5,6,7,8-tetrahydrofolate. The protein operates within cofactor biosynthesis; (R)-pantothenate biosynthesis; (R)-pantoate from 3-methyl-2-oxobutanoate: step 1/2. Its function is as follows. Catalyzes the reversible reaction in which hydroxymethyl group from 5,10-methylenetetrahydrofolate is transferred onto alpha-ketoisovalerate to form ketopantoate. This is 3-methyl-2-oxobutanoate hydroxymethyltransferase from Escherichia coli O157:H7.